We begin with the raw amino-acid sequence, 132 residues long: Small ribosomal subunit protein eS12 (132 aa).

It belongs to the eukaryotic ribosomal protein eS12 family.

The protein localises to the cytoplasm. The protein is Small ribosomal subunit protein eS12 (rps12) of Xenopus laevis (African clawed frog).